We begin with the raw amino-acid sequence, 217 residues long: TPA-induced transmembrane protein (217 aa).

Residues 1–37 (MDLAQPSQPVDELELSVLERQPEENTPLNGADKVFPS) are disordered. Residues 66 to 86 (LWMIITSIFLGVITVIIIGLC) form a helical membrane-spanning segment.

Interacts with LIPH. In terms of tissue distribution, detected predominantly in the skin, with strongest expression in the inner root sheath of the hair follicle.

It is found in the endoplasmic reticulum. The protein resides in the cell membrane. Functionally, has a role in LIPH-mediated synthesis of 2-acyl lysophosphatidic acid (LPA). LPA is a bioactive lipid mediator involved in different biological processes, and necessary to promote hair formation and growth. The sequence is that of TPA-induced transmembrane protein (TTMP) from Homo sapiens (Human).